A 413-amino-acid chain; its full sequence is Serine hydroxymethyltransferase (413 aa).

(6S)-5,6,7,8-tetrahydrofolate-binding positions include Leu117 and 121–123 (GHL). An N6-(pyridoxal phosphate)lysine modification is found at Lys226. (6S)-5,6,7,8-tetrahydrofolate-binding positions include Glu239 and 349–351 (SPF).

Belongs to the SHMT family. Homodimer. Requires pyridoxal 5'-phosphate as cofactor.

The protein localises to the cytoplasm. It catalyses the reaction (6R)-5,10-methylene-5,6,7,8-tetrahydrofolate + glycine + H2O = (6S)-5,6,7,8-tetrahydrofolate + L-serine. It participates in one-carbon metabolism; tetrahydrofolate interconversion. Its pathway is amino-acid biosynthesis; glycine biosynthesis; glycine from L-serine: step 1/1. Its function is as follows. Catalyzes the reversible interconversion of serine and glycine with tetrahydrofolate (THF) serving as the one-carbon carrier. This reaction serves as the major source of one-carbon groups required for the biosynthesis of purines, thymidylate, methionine, and other important biomolecules. Also exhibits THF-independent aldolase activity toward beta-hydroxyamino acids, producing glycine and aldehydes, via a retro-aldol mechanism. The polypeptide is Serine hydroxymethyltransferase (Bacillus cereus (strain AH187)).